The sequence spans 155 residues: Large ribosomal subunit protein uL30 (155 aa).

This sequence belongs to the universal ribosomal protein uL30 family. As to quaternary structure, part of the 50S ribosomal subunit.

The protein is Large ribosomal subunit protein uL30 of Cenarchaeum symbiosum (strain A).